A 117-amino-acid polypeptide reads, in one-letter code: Prefoldin subunit beta (117 aa).

The protein belongs to the prefoldin subunit beta family. As to quaternary structure, heterohexamer of two alpha and four beta subunits.

Its subcellular location is the cytoplasm. Its function is as follows. Molecular chaperone capable of stabilizing a range of proteins. Seems to fulfill an ATP-independent, HSP70-like function in archaeal de novo protein folding. In Methanococcoides burtonii (strain DSM 6242 / NBRC 107633 / OCM 468 / ACE-M), this protein is Prefoldin subunit beta.